The primary structure comprises 157 residues: Class-10 pathogenesis-related protein 1 (157 aa).

Belongs to the BetVI family. In terms of tissue distribution, expressed in roots. Detected in nodules and leaves, but not in stems and flowers.

This chain is Class-10 pathogenesis-related protein 1 (PR10-1), found in Medicago truncatula (Barrel medic).